The primary structure comprises 162 residues: Calcium-binding protein 4b (162 aa).

EF-hand domains are found at residues 10-45 (ELTN…CKYP), 46-81 (NPTL…DYII), 85-120 (TCLK…SGSN), and 123-158 (QAKV…YFEI). Positions 23, 25, 27, 29, 34, 59, 61, 63, 65, and 70 each coordinate Ca(2+). Ca(2+) is bound by residues aspartate 136, aspartate 138, aspartate 140, cysteine 142, and glutamate 147.

The protein is Calcium-binding protein 4b (cbpD2) of Dictyostelium discoideum (Social amoeba).